Consider the following 519-residue polypeptide: Putative glucosylceramidase 4 (519 aa).

The N-terminal stretch at 1-24 is a signal peptide; it reads MILNISVSLLIFLAFYGFSSDAKS. The Proton donor role is filled by E256. E361 (nucleophile) is an active-site residue.

Belongs to the glycosyl hydrolase 30 family.

The catalysed reaction is a beta-D-glucosylceramide + H2O = an N-acyl-sphingoid base + D-glucose. The enzyme catalyses a beta-D-glucosyl-(1&lt;-&gt;1')-N-acylsphing-4-enine + H2O = an N-acylsphing-4-enine + D-glucose. It catalyses the reaction an N-acyl-1-beta-D-glucosyl-15-methylhexadecasphing-4-enine + H2O = an N-acyl-15-methylhexadecasphing-4-enine + D-glucose. It participates in lipid metabolism; sphingolipid metabolism. In terms of biological role, glucosylceramidase that catalyzes the hydrolysis of glucosylceramides into free ceramides and glucose. C.elegans contains specific sphingoid bases, which are unique or different in structure compared to the sphingoid bases found in other animals. Two examples of these distinctive compounds are: 15-methylhexadecasphinganine and 15-methylhexadecasphing-4-enine. The polypeptide is Putative glucosylceramidase 4 (gba-4) (Caenorhabditis elegans).